The sequence spans 211 residues: Thiamine-phosphate synthase (211 aa).

4-amino-2-methyl-5-(diphosphooxymethyl)pyrimidine is bound by residues 37–41 and Asn69; that span reads QLRIK. Residues Asp70 and Asp89 each contribute to the Mg(2+) site. Ser108 contributes to the 4-amino-2-methyl-5-(diphosphooxymethyl)pyrimidine binding site. 134-136 serves as a coordination point for 2-[(2R,5Z)-2-carboxy-4-methylthiazol-5(2H)-ylidene]ethyl phosphate; sequence TQT. 4-amino-2-methyl-5-(diphosphooxymethyl)pyrimidine is bound at residue Lys137. 2-[(2R,5Z)-2-carboxy-4-methylthiazol-5(2H)-ylidene]ethyl phosphate-binding positions include Gly166 and 186 to 187; that span reads VS.

It belongs to the thiamine-phosphate synthase family. Requires Mg(2+) as cofactor.

The enzyme catalyses 2-[(2R,5Z)-2-carboxy-4-methylthiazol-5(2H)-ylidene]ethyl phosphate + 4-amino-2-methyl-5-(diphosphooxymethyl)pyrimidine + 2 H(+) = thiamine phosphate + CO2 + diphosphate. The catalysed reaction is 2-(2-carboxy-4-methylthiazol-5-yl)ethyl phosphate + 4-amino-2-methyl-5-(diphosphooxymethyl)pyrimidine + 2 H(+) = thiamine phosphate + CO2 + diphosphate. It carries out the reaction 4-methyl-5-(2-phosphooxyethyl)-thiazole + 4-amino-2-methyl-5-(diphosphooxymethyl)pyrimidine + H(+) = thiamine phosphate + diphosphate. The protein operates within cofactor biosynthesis; thiamine diphosphate biosynthesis; thiamine phosphate from 4-amino-2-methyl-5-diphosphomethylpyrimidine and 4-methyl-5-(2-phosphoethyl)-thiazole: step 1/1. Condenses 4-methyl-5-(beta-hydroxyethyl)thiazole monophosphate (THZ-P) and 2-methyl-4-amino-5-hydroxymethyl pyrimidine pyrophosphate (HMP-PP) to form thiamine monophosphate (TMP). This chain is Thiamine-phosphate synthase, found in Shigella dysenteriae serotype 1 (strain Sd197).